A 262-amino-acid chain; its full sequence is Ubiquitin thioesterase otubain-like (262 aa).

The 199-residue stretch at 64 to 262 (KFIRRTRPDG…PGHYDILYPN (199 aa)) folds into the OTU domain. Asp72 is an active-site residue. Cys75 acts as the Nucleophile in catalysis. Position 168 (Ile168) interacts with substrate. His255 is an active-site residue.

This sequence belongs to the peptidase C65 family.

It catalyses the reaction Thiol-dependent hydrolysis of ester, thioester, amide, peptide and isopeptide bonds formed by the C-terminal Gly of ubiquitin (a 76-residue protein attached to proteins as an intracellular targeting signal).. Possible hydrolase that can remove conjugated ubiquitin from proteins in vitro and may therefore play an important regulatory role at the level of protein turnover by preventing degradation. This is Ubiquitin thioesterase otubain-like from Drosophila melanogaster (Fruit fly).